Reading from the N-terminus, the 417-residue chain is Tryptophan synthase beta chain (417 aa).

Lys-110 carries the N6-(pyridoxal phosphate)lysine modification.

It belongs to the TrpB family. Tetramer of two alpha and two beta chains. Pyridoxal 5'-phosphate is required as a cofactor.

The catalysed reaction is (1S,2R)-1-C-(indol-3-yl)glycerol 3-phosphate + L-serine = D-glyceraldehyde 3-phosphate + L-tryptophan + H2O. It functions in the pathway amino-acid biosynthesis; L-tryptophan biosynthesis; L-tryptophan from chorismate: step 5/5. In terms of biological role, the beta subunit is responsible for the synthesis of L-tryptophan from indole and L-serine. This Prochlorococcus marinus (strain NATL2A) protein is Tryptophan synthase beta chain.